Reading from the N-terminus, the 640-residue chain is 1-deoxy-D-xylulose-5-phosphate synthase (640 aa).

Residues His-75 and 117–119 (GHA) contribute to the thiamine diphosphate site. Residue Asp-146 coordinates Mg(2+). Residues 147-148 (AA), Asn-175, and Glu-370 contribute to the thiamine diphosphate site. Asn-175 is a binding site for Mg(2+).

The protein belongs to the transketolase family. DXPS subfamily. Homodimer. The cofactor is Mg(2+). It depends on thiamine diphosphate as a cofactor.

It catalyses the reaction D-glyceraldehyde 3-phosphate + pyruvate + H(+) = 1-deoxy-D-xylulose 5-phosphate + CO2. The protein operates within metabolic intermediate biosynthesis; 1-deoxy-D-xylulose 5-phosphate biosynthesis; 1-deoxy-D-xylulose 5-phosphate from D-glyceraldehyde 3-phosphate and pyruvate: step 1/1. Its function is as follows. Catalyzes the acyloin condensation reaction between C atoms 2 and 3 of pyruvate and glyceraldehyde 3-phosphate to yield 1-deoxy-D-xylulose-5-phosphate (DXP). In Chlamydia trachomatis serovar L2 (strain ATCC VR-902B / DSM 19102 / 434/Bu), this protein is 1-deoxy-D-xylulose-5-phosphate synthase.